The sequence spans 136 residues: MPARADVRLAPRQRLTRGLKYTAVGPVDITRGVLGIGADTAQATAAELRRRYASGKLQRQLAAAAEAVAALPETIQEAVQEVVSPPKKRRRRPLLIAAVAVTVLGGGAAAFSIVRRRSRPQEPPTLAPSVEVAPKP.

The chain crosses the membrane as a helical span at residues Leu-94 to Val-114.

The protein belongs to the CwsA family. Interacts with CrgA and Wag31.

The protein resides in the cell membrane. Functionally, required for regulated cell division, cell wall synthesis and the maintenance of cell shape. The protein is Cell wall synthesis protein CwsA of Mycolicibacterium smegmatis (strain ATCC 700084 / mc(2)155) (Mycobacterium smegmatis).